A 104-amino-acid polypeptide reads, in one-letter code: DET1- and DDB1-associated protein 1 (104 aa).

The span at 67–77 shows a compositional bias: basic and acidic residues; sequence KKNAAKKREQE. Residues 67-104 are disordered; sequence KKNAAKKREQEQAEGEGGSPAPPRKIARTDSQEMNEDS.

It belongs to the DDA1 family. Component of numerous DCX (DDB1-CUL4-X-box) E3 ubiquitin-protein ligase complexes which consist of a core of DDB1, cullin-4 (CUL4A or CUL4B), DDA1 and RBX1.

It functions in the pathway protein modification; protein ubiquitination. Functions as a component of numerous distinct DCX (DDB1-CUL4-X-box) E3 ubiquitin-protein ligase complexes which mediate the ubiquitination and subsequent proteasomal degradation of target proteins. In the DCX complexes, acts as a scaffolding subunit required to stabilize the complex. The sequence is that of DET1- and DDB1-associated protein 1 from Danio rerio (Zebrafish).